Consider the following 189-residue polypeptide: UPF0301 protein CCA_00630 (189 aa).

The protein belongs to the UPF0301 (AlgH) family.

This chain is UPF0301 protein CCA_00630, found in Chlamydia caviae (strain ATCC VR-813 / DSM 19441 / 03DC25 / GPIC) (Chlamydophila caviae).